A 187-amino-acid chain; its full sequence is MARHIIILVAVFWFATAEASHCSINGLPLVRNISELPQENYGRSGLSHTTIAGSVLHGMKEIEVWLQTFAPGFRTPIHRHSCEEIFIVLKGQGTLYLTPSSHSKYPGNPQEFHIFPNSTFHIPVNDVHQVWNTGEQEDLQVLDVISRPPVKVFMYDDWSMPHTAAKLKFPYYWDEECYQTTSRKDEL.

The signal sequence occupies residues 1–20 (MARHIIILVAVFWFATAEAS). An intrachain disulfide couples cysteine 22 to cysteine 177. Positions 78, 80, and 84 each coordinate Zn(2+). An N-linked (GlcNAc...) asparagine glycan is attached at asparagine 117. Residue histidine 128 coordinates Zn(2+). A Prevents secretion from ER motif is present at residues 184-187 (KDEL).

In terms of assembly, homodimer.

The protein localises to the endoplasmic reticulum lumen. Functionally, this is probably a receptor for the plant hormone auxin. The polypeptide is Auxin-binding protein T92 (T92) (Nicotiana tabacum (Common tobacco)).